We begin with the raw amino-acid sequence, 100 residues long: Urease subunit gamma (100 aa).

It belongs to the urease gamma subunit family. Heterotrimer of UreA (gamma), UreB (beta) and UreC (alpha) subunits. Three heterotrimers associate to form the active enzyme.

Its subcellular location is the cytoplasm. It catalyses the reaction urea + 2 H2O + H(+) = hydrogencarbonate + 2 NH4(+). It participates in nitrogen metabolism; urea degradation; CO(2) and NH(3) from urea (urease route): step 1/1. In Burkholderia cenocepacia (strain ATCC BAA-245 / DSM 16553 / LMG 16656 / NCTC 13227 / J2315 / CF5610) (Burkholderia cepacia (strain J2315)), this protein is Urease subunit gamma.